Here is a 65-residue protein sequence, read N- to C-terminus: Large ribosomal subunit protein bL35 (65 aa).

This sequence belongs to the bacterial ribosomal protein bL35 family.

In Parasynechococcus marenigrum (strain WH8102), this protein is Large ribosomal subunit protein bL35.